A 359-amino-acid polypeptide reads, in one-letter code: DNA integrity scanning protein DisA (359 aa).

The DAC domain occupies 7–146; sequence DEVLRQTLAI…NRRYVLEGSD (140 aa). Residues Gly74, Leu92, and 105–109 each bind ATP; that span reads TRHRT.

Belongs to the DisA family. Homooctamer. The cofactor is Mg(2+).

It carries out the reaction 2 ATP = 3',3'-c-di-AMP + 2 diphosphate. Functionally, participates in a DNA-damage check-point. DisA forms globular foci that rapidly scan along the chromosomes searching for lesions. Also has diadenylate cyclase activity, catalyzing the condensation of 2 ATP molecules into cyclic di-AMP (c-di-AMP). c-di-AMP likely acts as a signaling molecule that may couple DNA integrity with a cellular process. This chain is DNA integrity scanning protein DisA, found in Kineococcus radiotolerans (strain ATCC BAA-149 / DSM 14245 / SRS30216).